Reading from the N-terminus, the 158-residue chain is Transcription elongation factor GreA (158 aa).

It belongs to the GreA/GreB family.

In terms of biological role, necessary for efficient RNA polymerase transcription elongation past template-encoded arresting sites. The arresting sites in DNA have the property of trapping a certain fraction of elongating RNA polymerases that pass through, resulting in locked ternary complexes. Cleavage of the nascent transcript by cleavage factors such as GreA or GreB allows the resumption of elongation from the new 3'terminus. GreA releases sequences of 2 to 3 nucleotides. The sequence is that of Transcription elongation factor GreA from Pelobacter propionicus (strain DSM 2379 / NBRC 103807 / OttBd1).